A 684-amino-acid polypeptide reads, in one-letter code: UvrABC system protein B (684 aa).

The Helicase ATP-binding domain maps to 30-188; it reads EGVQRGDRWQ…QELVSLHYVR (159 aa). An ATP-binding site is contributed by 43 to 50; the sequence is GVTGSGKT. Positions 96–119 match the Beta-hairpin motif; sequence YYDFYQPEAYLPALDKYIAKDLRI. Positions 435–601 constitute a Helicase C-terminal domain; the sequence is QIDDLLGEIR…SIIKSVEQVL (167 aa). The UVR domain occupies 641 to 676; that stretch reads YSMAESLRLEMQEAALKMEYEKAAYLRDEITKFEHR.

The protein belongs to the UvrB family. In terms of assembly, forms a heterotetramer with UvrA during the search for lesions. Interacts with UvrC in an incision complex.

It is found in the cytoplasm. The UvrABC repair system catalyzes the recognition and processing of DNA lesions. A damage recognition complex composed of 2 UvrA and 2 UvrB subunits scans DNA for abnormalities. Upon binding of the UvrA(2)B(2) complex to a putative damaged site, the DNA wraps around one UvrB monomer. DNA wrap is dependent on ATP binding by UvrB and probably causes local melting of the DNA helix, facilitating insertion of UvrB beta-hairpin between the DNA strands. Then UvrB probes one DNA strand for the presence of a lesion. If a lesion is found the UvrA subunits dissociate and the UvrB-DNA preincision complex is formed. This complex is subsequently bound by UvrC and the second UvrB is released. If no lesion is found, the DNA wraps around the other UvrB subunit that will check the other stand for damage. The protein is UvrABC system protein B of Chlorobium limicola (strain DSM 245 / NBRC 103803 / 6330).